The primary structure comprises 166 residues: 3-isopropylmalate dehydratase small subunit (166 aa).

The protein belongs to the LeuD family. LeuD type 2 subfamily. Heterodimer of LeuC and LeuD.

The enzyme catalyses (2R,3S)-3-isopropylmalate = (2S)-2-isopropylmalate. Its pathway is amino-acid biosynthesis; L-leucine biosynthesis; L-leucine from 3-methyl-2-oxobutanoate: step 2/4. Its function is as follows. Catalyzes the isomerization between 2-isopropylmalate and 3-isopropylmalate, via the formation of 2-isopropylmaleate. This Caldicellulosiruptor bescii (strain ATCC BAA-1888 / DSM 6725 / KCTC 15123 / Z-1320) (Anaerocellum thermophilum) protein is 3-isopropylmalate dehydratase small subunit.